The sequence spans 625 residues: Somatic embryogenesis receptor kinase 1 (625 aa).

The first 26 residues, 1–26 (MESSYVVFILLSLILLPNHSLWLASA), serve as a signal peptide directing secretion. The Extracellular portion of the chain corresponds to 27-238 (NLEGDALHTL…STPSGYGITG (212 aa)). The cysteines at positions 58 and 65 are disulfide-linked. Leucine-rich repeat receptor-like protein kinase binding stretches follow at residues 59–78 (TWFH…DLGN) and 97–102 (YLELYS). 61–62 (FH) contributes to the brassinolide binding site. LRR repeat units lie at residues 92-116 (LKNL…LGNL), 118-140 (NLVS…LGKL), 141-164 (SKLR…LTNI), and 165-189 (TTLQ…SFSL). N-linked (GlcNAc...) asparagine glycans are attached at residues Asn-104 and Asn-115. Leucine-rich repeat receptor-like protein kinase binding regions lie at residues 123–126 (DLYL) and 145–147 (FLR). N-linked (GlcNAc...) asparagine glycosylation is found at Asn-150, Asn-163, and Asn-184. A leucine-rich repeat receptor-like protein kinase binding region spans residues 171–194 (DLSNNRLSGSVPDNGSFSLFTPIS). Cys-202 and Cys-210 form a disulfide bridge. Residues 239–259 (AIAGGVAAGAALLFAAPAIAF) form a helical membrane-spanning segment. Over 260 to 625 (AWWRRRKPLD…LHAVELSGPR (366 aa)) the chain is Cytoplasmic. A phosphoserine mark is found at Ser-291, Ser-299, and Ser-303. Residues 302 to 589 (FSNKNILGRG…GLAEKWDEWQ (288 aa)) form the Protein kinase domain. 308-316 (LGRGGFGKV) contacts ATP. The residue at position 325 (Thr-325) is a Phosphothreonine. Residue Lys-330 participates in ATP binding. Phosphothreonine is present on residues Thr-337 and Thr-346. A phosphoserine mark is found at Ser-352, Ser-383, Ser-386, and Ser-394. Thr-402 carries the phosphothreonine modification. Residue Ser-415 is modified to Phosphoserine. The active-site Proton acceptor is the Asp-429. Tyr-456 carries the post-translational modification Phosphotyrosine. Phosphothreonine is present on residues Thr-459, Thr-462, Thr-463, and Thr-468. The residue at position 476 (Tyr-476) is a Phosphotyrosine. Ser-478 carries the post-translational modification Phosphoserine. At Thr-479 the chain carries Phosphothreonine. Phosphoserine is present on Ser-483. The residue at position 541 (Thr-541) is a Phosphothreonine. At Tyr-543 the chain carries Phosphotyrosine. Phosphothreonine is present on Thr-559. 2 positions are modified to phosphoserine: Ser-606 and Ser-612. The residue at position 613 (Thr-613) is a Phosphothreonine. Phosphotyrosine is present on Tyr-614. Ser-622 is subject to Phosphoserine.

The protein belongs to the protein kinase superfamily. Ser/Thr protein kinase family. Monomer, homo- and heterodimer. Interacts with KAPP, CDC48A, GRF6 or GRF7, SERK2, BRI1 and SERK3/BAK1 to form the SERK1 signaling complex. Bind to BRI1 in a brassinolide-dependent manner. Heterodimer with PSKR1. Interacts with the EF-Tu receptor EFR and FLS2 in a specific ligand-induced manner. Interacts with ERECTA in a EPF2-induced manner. Interacts with ERL1 in a EPF1-induced manner. Interacts with TMM. In the presence of the signal peptide RGF1, interacts with RGI1/RGFR4/RCH2, RGI2/RGFR3/RCH1, RGI3/RGFR1, RGI4/RGFR2/SKM2 and RGI5/RGFR5. It depends on Mg(2+) as a cofactor. Post-translationally, glycosylated. Important for targeting to the plasma membrane. Intermolecular autophosphorylation. The catalytic activity of SERK1 depends on the presence of a phosphorylated Thr residue in SERK1. The phosphorylation is induced by brassinosteroids. Transphosphorylation by BRI1 occurs only on Ser-299 and Thr-462. Dephosphorylation of threonine residues by the kinase-associated protein phosphatase (KAPP) is involved in SERK1 endocytosis. As to expression, expressed in flowers, tapetum, developing microspores, all cells of the embryo sac, provascular strands and developing vascular bundles. Low expression in adult vascular tissue. Detected in root meristem.

The protein resides in the cell membrane. It localises to the endoplasmic reticulum membrane. The enzyme catalyses L-seryl-[protein] + ATP = O-phospho-L-seryl-[protein] + ADP + H(+). It carries out the reaction L-threonyl-[protein] + ATP = O-phospho-L-threonyl-[protein] + ADP + H(+). The catalysed reaction is L-tyrosyl-[protein] + ATP = O-phospho-L-tyrosyl-[protein] + ADP + H(+). Inhibited by manganese. Its function is as follows. Dual specificity kinase acting on both serine/threonine- and tyrosine-containing substrates. Phosphorylates BRI1 on 'Ser-887' and CDC48 on at least one threonine residue and on 'Ser-41'. Confers embryogenic competence. Acts redundantly with SERK2 as a control point for sporophytic development controlling male gametophyte production. Involved in the brassinolide signaling pathway. Probably required during small peptide (e.g. RGF1) signaling. Involved in the perception of phytosulfokine and subsequent signal transduction. Acts as a RLK5 coreceptor and promotes high-affinity IDA sensing, thus being a positive regulator of floral abscission. The protein is Somatic embryogenesis receptor kinase 1 of Arabidopsis thaliana (Mouse-ear cress).